A 307-amino-acid polypeptide reads, in one-letter code: uncharacterized protein (307 aa).

The HTH lysR-type domain occupies 11–68; sequence IRLRHLHTFVAVAQQGTLGRAAETLNLSQPALSKTLNELEQLTGARLFERGRQGAQLT. The segment at residues 28–47 is a DNA-binding region (H-T-H motif); sequence LGRAAETLNLSQPALSKTLN.

This sequence belongs to the LysR transcriptional regulatory family.

This is an uncharacterized protein from Escherichia coli (strain K12).